The primary structure comprises 200 residues: Probable GTP-binding protein EngB (200 aa).

The 175-residue stretch at 25–199 folds into the EngB-type G domain; that stretch reads SGYEVAFAGR…ISLLDRWYEW (175 aa). Residues 33–40, 60–64, 78–81, 145–148, and 178–180 contribute to the GTP site; these read GRSNAGKS, GRTQL, DLPG, TKAD, and FSS. The Mg(2+) site is built by Ser-40 and Thr-62.

The protein belongs to the TRAFAC class TrmE-Era-EngA-EngB-Septin-like GTPase superfamily. EngB GTPase family. It depends on Mg(2+) as a cofactor.

In terms of biological role, necessary for normal cell division and for the maintenance of normal septation. This Legionella pneumophila (strain Corby) protein is Probable GTP-binding protein EngB.